A 406-amino-acid chain; its full sequence is Copper transport protein CTR1 (406 aa).

Topologically, residues 1-152 (MEGMNMGSSM…HHLHANNSGK (152 aa)) are cytoplasmic. Tandem repeats lie at residues 9 to 27 (SMNM…SSMA), 28 to 46 (SMSM…SSMS), and 47 to 65 (SMSM…STMS). The 3 X 19 AA tandem repeats of S-M-X-M-X-A-M-S-S-A-S-K-T-X-X-S-X-M-X stretch occupies residues 9–65 (SMNMDAMSSASKTVASSMASMSMDAMSSASKTILSSMSSMSMEAMSSASKTLASTMS). The interval 71-117 (SMGSSSMSGMSMSMSSTPTSSASAQTTSDSSMSGMSGMSSSDNSSSS) is disordered. The chain crosses the membrane as a helical span at residues 153 to 173 (AFGIFLLFVVAAFVYKLLLFV). The Extracellular portion of the chain corresponds to 174–250 (SWCLEVHWFK…RAFLVFTSTM (77 aa)). The helical transmembrane segment at 251–271 (IIYMLMLATMSFVLTYVFAVI) threads the bilayer. Over 272-406 (TGLALSEVFF…LLPAEKFTHN (135 aa)) the chain is Cytoplasmic. The short motif at 304 to 315 (CPGFGNCQCGRH) is the REP-III element. The segment at 318-406 (PSPDPIAVAD…LLPAEKFTHN (89 aa)) is disordered. Ser344 bears the Phosphoserine mark. Lys345 participates in a covalent cross-link: Glycyl lysine isopeptide (Lys-Gly) (interchain with G-Cter in ubiquitin). Ser349 is subject to Phosphoserine. 2 stretches are compositionally biased toward polar residues: residues 349-375 (SENN…NQAN) and 384-395 (SKLQEQSGNMDQ). Position 356 is a phosphothreonine (Thr356). At Ser369 the chain carries Phosphoserine.

Homooligomer. In terms of processing, extensively O-glycosylated.

The protein localises to the cell membrane. The enzyme catalyses Cu(2+)(in) = Cu(2+)(out). Its function is as follows. High-affinity copper transporter of plasma membrane that mediates copper uptake under low copper conditions. Copper transport through the high affinity system requiring CTRl supplies the iron transport multicopper ferroxidase FET3 with copper, which in turn is required for ferrous iron uptake. The energy for translocation is unlikely to be directly derived from ATP hydrolysis and the exact mechanism driving the transmembrane transport of copper has still to be determined. Binds 4 copper ions via its C-terminal cystein-rich domain and is able to deliver Cu(I) directly to both the chaperone ATX1 and to an N-terminal domain of the CCC2 protein. Also able to mediate the uptake of the anticancer drug cisplatin. The chain is Copper transport protein CTR1 from Saccharomyces cerevisiae (strain ATCC 204508 / S288c) (Baker's yeast).